We begin with the raw amino-acid sequence, 807 residues long: Maternal DNA replication licensing factor mcm3 (807 aa).

The MCM domain occupies 295-502 (IFEHLSKSLA…NDQEIADHVL (208 aa)). Residue 345 to 352 (GDPSVAKS) participates in ATP binding. The Arginine finger signature appears at 477–480 (SRFD). Basic and acidic residues predominate over residues 664 to 673 (KTDKDLHDEN). The interval 664–741 (KTDKDLHDEN…QDGKRSLSQN (78 aa)) is disordered. Residues 707 to 723 (FSEQDSSLNENLSQSLR) are compositionally biased toward polar residues. A compositionally biased stretch (basic and acidic residues) spans 727-741 (KKAESQDGKRSLSQN).

It belongs to the MCM family. In terms of assembly, component of the mcm2-7 complex (RLF-M). The complex forms a toroidal hexameric ring with the proposed subunit order mcm2-mcm6-mcm4-mcm7-mcm3-mcm5. The heterodimer of mmcm3/mcm5 interacts with mcm4, mmcm6, mcm7 and weakly with mcm2. Interacts with mcm7, though this interaction may not be direct, and remains in a complex with mcm7 throughout the cell cycle. Component of the CMG helicase complex, composed of the mcm2-7 complex, the GINS complex and cdc45.

Its subcellular location is the nucleus. The protein resides in the chromosome. It carries out the reaction ATP + H2O = ADP + phosphate + H(+). Acts as a component of the mcm2-7 complex (mcm complex) which is the putative replicative helicase essential for 'once per cell cycle' DNA replication initiation and elongation in eukaryotic cells. The active ATPase sites in the mcm2-7 ring are formed through the interaction surfaces of two neighboring subunits such that a critical structure of a conserved arginine finger motif is provided in trans relative to the ATP-binding site of the Walker A box of the adjacent subunit. The six ATPase active sites, however, are likely to contribute differentially to the complex helicase activity. The existence of maternal and zygotic forms of mcm3 and mcm6 suggests that specific forms of mcm2-7 complexes may be used during different stages of development. This is Maternal DNA replication licensing factor mcm3 (mmcm3) from Xenopus laevis (African clawed frog).